The primary structure comprises 294 residues: ATP synthase gamma chain (294 aa).

This sequence belongs to the ATPase gamma chain family. F-type ATPases have 2 components, CF(1) - the catalytic core - and CF(0) - the membrane proton channel. CF(1) has five subunits: alpha(3), beta(3), gamma(1), delta(1), epsilon(1). CF(0) has three main subunits: a, b and c.

It is found in the cell inner membrane. In terms of biological role, produces ATP from ADP in the presence of a proton gradient across the membrane. The gamma chain is believed to be important in regulating ATPase activity and the flow of protons through the CF(0) complex. The protein is ATP synthase gamma chain of Mesorhizobium japonicum (strain LMG 29417 / CECT 9101 / MAFF 303099) (Mesorhizobium loti (strain MAFF 303099)).